The primary structure comprises 439 residues: uncharacterized protein (439 aa).

The 324-residue stretch at 116-439 (GKAASYRAAQ…PMRTPLQEAE (324 aa)) folds into the YcaO domain.

This is an uncharacterized protein from Mycobacterium tuberculosis (strain CDC 1551 / Oshkosh).